Consider the following 225-residue polypeptide: Ribonuclease 3 (225 aa).

Residues 5-127 form the RNase III domain; that stretch reads LERLQRQIGY…IIGAISLDSD (123 aa). A Mg(2+)-binding site is contributed by Glu40. Asp44 is an active-site residue. Mg(2+)-binding residues include Asp113 and Glu116. The active site involves Glu116. The 71-residue stretch at 154–224 folds into the DRBM domain; that stretch reads DPKTRLQEYL…AEKILQLLEM (71 aa).

This sequence belongs to the ribonuclease III family. Homodimer. It depends on Mg(2+) as a cofactor.

The protein localises to the cytoplasm. The enzyme catalyses Endonucleolytic cleavage to 5'-phosphomonoester.. Its function is as follows. Digests double-stranded RNA. Involved in the processing of primary rRNA transcript to yield the immediate precursors to the large and small rRNAs (23S and 16S). Also processes some mRNAs, and tRNAs when they are encoded in the rRNA operon. In terms of biological role, CRISPR (clustered regularly interspaced short palindromic repeat) is an adaptive immune system that provides protection against mobile genetic elements (viruses, transposable elements and conjugative plasmids). CRISPR clusters contain spacers, sequences complementary to antecedent mobile elements, and target invading nucleic acids. CRISPR clusters are transcribed and processed into CRISPR RNA (crRNA). In this organism endogenous ribonuclease 3 and Cas9 are required for correct coprocessing of pre-crRNA and the trans-encoded small RNA (tracrRNA). Cas9, crRNA and tracrRNA are required for cleavage of invading DNA. Complements pre-crRNA and tracrRNA coprocessing defects in an rnc deletion in S.pyogenes strain 370. In Pasteurella multocida (strain Pm70), this protein is Ribonuclease 3.